The sequence spans 311 residues: ATP synthase subunit a (311 aa).

Transmembrane regions (helical) follow at residues 62-82 (AVHVDTLGWGIFLALVVGFFM), 123-143 (VAPMAITVFSWVFMMNLMDLI), 179-199 (VTVFILMLFFSVQQKGLWGFI), 213-233 (FWYFNLILIPFNFILETVALI), 253-273 (IFILIATLFSVGLLFGFLGGI), and 276-296 (FGWAVLHILVILIQAFVFMVL).

Belongs to the ATPase A chain family. As to quaternary structure, F-type ATPases have 2 components, CF(1) - the catalytic core - and CF(0) - the membrane proton channel. CF(1) has five subunits: alpha(3), beta(3), gamma(1), delta(1), epsilon(1). CF(0) has three main subunits: a(1), b(2) and c(9-12). The alpha and beta chains form an alternating ring which encloses part of the gamma chain. CF(1) is attached to CF(0) by a central stalk formed by the gamma and epsilon chains, while a peripheral stalk is formed by the delta and b chains.

The protein resides in the cell inner membrane. Key component of the proton channel; it plays a direct role in the translocation of protons across the membrane. The protein is ATP synthase subunit a of Teredinibacter turnerae (strain ATCC 39867 / T7901).